The following is a 350-amino-acid chain: Protein pelota homolog (350 aa).

The protein belongs to the eukaryotic release factor 1 family. Pelota subfamily. In terms of assembly, monomer. The cofactor is a divalent metal cation.

The protein resides in the cytoplasm. May function in recognizing stalled ribosomes, interact with stem-loop structures in stalled mRNA molecules, and effect endonucleolytic cleavage of the mRNA. May play a role in the release non-functional ribosomes and degradation of damaged mRNAs. Has endoribonuclease activity. This chain is Protein pelota homolog, found in Methanosarcina barkeri (strain Fusaro / DSM 804).